Here is a 425-residue protein sequence, read N- to C-terminus: Phosphomethylpyrimidine synthase (425 aa).

Residues N66, M95, Y124, H159, 181 to 183, 222 to 225, and E261 contribute to the substrate site; these read SRG and DAYR. Residue H265 participates in Zn(2+) binding. Y288 contributes to the substrate binding site. H329 lines the Zn(2+) pocket. Positions 406, 409, and 413 each coordinate [4Fe-4S] cluster.

It belongs to the ThiC family. Requires [4Fe-4S] cluster as cofactor.

The enzyme catalyses 5-amino-1-(5-phospho-beta-D-ribosyl)imidazole + S-adenosyl-L-methionine = 4-amino-2-methyl-5-(phosphooxymethyl)pyrimidine + CO + 5'-deoxyadenosine + formate + L-methionine + 3 H(+). It participates in cofactor biosynthesis; thiamine diphosphate biosynthesis. Catalyzes the synthesis of the hydroxymethylpyrimidine phosphate (HMP-P) moiety of thiamine from aminoimidazole ribotide (AIR) in a radical S-adenosyl-L-methionine (SAM)-dependent reaction. The chain is Phosphomethylpyrimidine synthase from Archaeoglobus fulgidus (strain ATCC 49558 / DSM 4304 / JCM 9628 / NBRC 100126 / VC-16).